The following is a 542-amino-acid chain: Cytochrome P450 monooxygenase 91 (542 aa).

The first 22 residues, 1–22 (MLDILRFVLICGILWILRRVLL), serve as a signal peptide directing secretion. 2 N-linked (GlcNAc...) asparagine glycosylation sites follow: N299 and N392. Residue C482 coordinates heme.

This sequence belongs to the cytochrome P450 family. The cofactor is heme.

It participates in secondary metabolite biosynthesis. Cytochrome P450 monooxygenase that is able to use dehydroabietic acid as a substrate for oxidation. This is Cytochrome P450 monooxygenase 91 from Postia placenta (strain ATCC 44394 / Madison 698-R) (Brown rot fungus).